Reading from the N-terminus, the 163-residue chain is Phosphopantetheine adenylyltransferase (163 aa).

S9 is a binding site for substrate. Residues 9-10 (SF) and H17 contribute to the ATP site. 3 residues coordinate substrate: K41, T73, and R87. ATP-binding positions include 88–90 (GLR), E98, and 123–129 (YAYFSSS).

Belongs to the bacterial CoaD family. In terms of assembly, homohexamer. It depends on Mg(2+) as a cofactor.

It localises to the cytoplasm. The enzyme catalyses (R)-4'-phosphopantetheine + ATP + H(+) = 3'-dephospho-CoA + diphosphate. It participates in cofactor biosynthesis; coenzyme A biosynthesis; CoA from (R)-pantothenate: step 4/5. Functionally, reversibly transfers an adenylyl group from ATP to 4'-phosphopantetheine, yielding dephospho-CoA (dPCoA) and pyrophosphate. This Lactiplantibacillus plantarum (strain ATCC BAA-793 / NCIMB 8826 / WCFS1) (Lactobacillus plantarum) protein is Phosphopantetheine adenylyltransferase.